A 354-amino-acid polypeptide reads, in one-letter code: Hydrophobic dipeptide epimerase (354 aa).

Substrate is bound by residues Thr134, Lys159, and 159–161; that span reads KIK. Mg(2+) is bound at residue Asp189. Asn191 is a substrate binding site. Mg(2+) contacts are provided by Glu215 and Asp240. Substrate-binding positions include Lys264, 292-295, and 318-320; these read CMAE and DLD.

It belongs to the mandelate racemase/muconate lactonizing enzyme family. Mg(2+) is required as a cofactor.

Its function is as follows. Catalyzes the epimerization of L-Ile-L-Tyr to L-Ile-D-Tyr (in vitro). Catalyzes the epimerization of dipeptides, with a preference for substrates with a hydrophobic or basic amino acid in the first position, followed by an aromatic residue in the second position. Has epimerase activity with L-Ile-L-Tyr, L-Val-L-Tyr and L-Arg-L-Tyr (in vitro). This Enterococcus faecalis (strain ATCC 700802 / V583) protein is Hydrophobic dipeptide epimerase.